A 342-amino-acid polypeptide reads, in one-letter code: Phosphate acyltransferase (342 aa).

The protein belongs to the PlsX family. In terms of assembly, homodimer. Probably interacts with PlsY.

It is found in the cytoplasm. It carries out the reaction a fatty acyl-[ACP] + phosphate = an acyl phosphate + holo-[ACP]. The protein operates within lipid metabolism; phospholipid metabolism. In terms of biological role, catalyzes the reversible formation of acyl-phosphate (acyl-PO(4)) from acyl-[acyl-carrier-protein] (acyl-ACP). This enzyme utilizes acyl-ACP as fatty acyl donor, but not acyl-CoA. The protein is Phosphate acyltransferase of Legionella pneumophila (strain Paris).